A 208-amino-acid chain; its full sequence is Small ribosomal subunit protein uS4 (208 aa).

The interval 32–53 (LNRKRGKNSPGQHGASKVKMSD) is disordered. An S4 RNA-binding domain is found at 99 to 161 (LRLDNVVYRL…YKSNVIIKKL (63 aa)).

Belongs to the universal ribosomal protein uS4 family. In terms of assembly, part of the 30S ribosomal subunit. Contacts protein S5. The interaction surface between S4 and S5 is involved in control of translational fidelity.

In terms of biological role, one of the primary rRNA binding proteins, it binds directly to 16S rRNA where it nucleates assembly of the body of the 30S subunit. With S5 and S12 plays an important role in translational accuracy. The chain is Small ribosomal subunit protein uS4 from Endomicrobium trichonymphae.